The sequence spans 31 residues: Photosystem I reaction center subunit XII (31 aa).

Residues 7–26 (QIFIALLTALIPAFFALKLG) traverse the membrane as a helical segment.

It belongs to the PsaM family.

It localises to the plastid. The protein resides in the chloroplast thylakoid membrane. This chain is Photosystem I reaction center subunit XII, found in Euglena granulata.